A 202-amino-acid polypeptide reads, in one-letter code: Small ribosomal subunit protein uS4c (202 aa).

Residues Met-90 to Ile-153 enclose the S4 RNA-binding domain.

This sequence belongs to the universal ribosomal protein uS4 family. As to quaternary structure, part of the 30S ribosomal subunit. Contacts protein S5. The interaction surface between S4 and S5 is involved in control of translational fidelity.

It is found in the plastid. It localises to the chloroplast. One of the primary rRNA binding proteins, it binds directly to 16S rRNA where it nucleates assembly of the body of the 30S subunit. Its function is as follows. With S5 and S12 plays an important role in translational accuracy. The protein is Small ribosomal subunit protein uS4c (rps4) of Hookeria lucens (Moss).